A 157-amino-acid chain; its full sequence is MSQVILDLQLACENHAGLPDEAQFQRWLDGVIPQFQEEAEVTIRLVDEAESHDLNLTYRGKDKPTNVLSFPFEAPPGIEMPLLGDLIICRQVVEQEAQEQSKPLEAHWAHMVVHGSLHLLGYDHIDDDEAEEMESLETEIMLAMGYEDPYIAEKIAE.

Positions 114, 118, and 124 each coordinate Zn(2+).

This sequence belongs to the endoribonuclease YbeY family. Requires Zn(2+) as cofactor.

The protein localises to the cytoplasm. In terms of biological role, single strand-specific metallo-endoribonuclease involved in late-stage 70S ribosome quality control and in maturation of the 3' terminus of the 16S rRNA. This chain is Endoribonuclease YbeY, found in Salmonella agona (strain SL483).